Consider the following 109-residue polypeptide: Mannose-specific lectin (109 aa).

Residues 1-109 (DNILYSSEVL…PPIWATGTGR (109 aa)) enclose the Bulb-type lectin domain. A disulfide bridge links C29 with C52. Positions 79–82 (TGTN) are excised as a propeptide.

As to quaternary structure, homotrimer or homotetramer.

It is found in the secreted. In terms of biological role, mannose-specific lectin. Shows agglutinating activity toward rabbit erythrocytes and mitogenic activity towards mouse lymphocytes. The protein is Mannose-specific lectin of Aloe arborescens (Kidachi aloe).